The following is a 200-amino-acid chain: MAKGNPRKRAAATKDKWKMKEWYVVYAPDFFGNKEIGLTPADDPEKVIGRVIETTLKDLTGDFTKGQVKLYFQIYDVKGQNAYTKFKGHTLSRSYIRSLVRRRTTRVDGIFNITTKDGYKLRVMGMVIAYRRIQTSQERAIREIMRDIIYKKAEELNYKDFILEAVTGKMATEIAKEARKIYPIKRAEIRKIKVLAEPEA.

It belongs to the eukaryotic ribosomal protein eS1 family.

This is Small ribosomal subunit protein eS1 from Thermococcus onnurineus (strain NA1).